The chain runs to 684 residues: U4/U6 small nuclear ribonucleoprotein Prp3 (684 aa).

In terms of domain architecture, PWI spans 1–87 (MSLSKRELDE…HSKSNSDRNR (87 aa)). Basic and acidic residues predominate over residues 73-107 (GRSSRHSKSNSDRNRKRELKDVFGDDSEVSKESSG). Disordered regions lie at residues 73–109 (GRSSRHSKSNSDRNRKRELKDVFGDDSEVSKESSGVK) and 162–183 (FISPPTPQPKISSSSQSERLPI). Residues 170 to 183 (PKISSSSQSERLPI) show a composition bias toward polar residues.

Component of the precatalytic spliceosome (spliceosome B complex). Component of the U4/U6-U5 tri-snRNP complex, a building block of the precatalytic spliceosome (spliceosome B complex). The U4/U6-U5 tri-snRNP complex is composed of the U4, U6 and U5 snRNAs and at least PRPF3, PRPF4, PRPF6, PRPF8, PRPF31, SNRNP200, TXNL4A, SNRNP40, SNRPB, SNRPD1, SNRPD2, SNRPD3, SNRPE, SNRPF, SNRPG, DDX23, CD2BP2, PPIH, SNU13, EFTUD2, SART1 and USP39, plus LSM2, LSM3, LSM4, LSM5, LSM6, LSM7 and LSM8.

It is found in the nucleus. The protein localises to the nucleus speckle. Its function is as follows. Plays a role in pre-mRNA splicing as component of the U4/U6-U5 tri-snRNP complex that is involved in spliceosome assembly, and as component of the precatalytic spliceosome (spliceosome B complex). The polypeptide is U4/U6 small nuclear ribonucleoprotein Prp3 (PRPF3) (Gallus gallus (Chicken)).